Reading from the N-terminus, the 91-residue chain is MPRSLKKGPFIDHHLLSKVEAAAEKNDRRPIKTWSRRSMILPNMVGLTLAVHNGRQHVPVLVNEEMVGHKLGEFAVTRLYRGHVADKKAKR.

This sequence belongs to the universal ribosomal protein uS19 family.

Protein S19 forms a complex with S13 that binds strongly to the 16S ribosomal RNA. The chain is Small ribosomal subunit protein uS19 from Saccharophagus degradans (strain 2-40 / ATCC 43961 / DSM 17024).